The following is a 250-amino-acid chain: NAD-dependent protein deacylase (250 aa).

The region spanning 1-248 (MLGEVSKILA…PKLVEEIRRI (248 aa)) is the Deacetylase sirtuin-type domain. 20–39 (GAGISAESGIPTFRGKDGLW) contributes to the NAD(+) binding site. Tyr-64 and Arg-67 together coordinate substrate. An NAD(+)-binding site is contributed by 98 to 101 (QNVD). His-116 functions as the Proton acceptor in the catalytic mechanism. 4 residues coordinate Zn(2+): Cys-124, Cys-127, Cys-150, and Cys-153. NAD(+) is bound by residues 190 to 192 (GTS), 216 to 218 (NIE), and Ala-234.

This sequence belongs to the sirtuin family. Class III subfamily. Requires Zn(2+) as cofactor.

Its subcellular location is the cytoplasm. It carries out the reaction N(6)-acetyl-L-lysyl-[protein] + NAD(+) + H2O = 2''-O-acetyl-ADP-D-ribose + nicotinamide + L-lysyl-[protein]. The enzyme catalyses N(6)-succinyl-L-lysyl-[protein] + NAD(+) + H2O = 2''-O-succinyl-ADP-D-ribose + nicotinamide + L-lysyl-[protein]. Functionally, NAD-dependent lysine deacetylase and desuccinylase that specifically removes acetyl and succinyl groups on target proteins. Modulates the activities of several proteins which are inactive in their acylated form. Deacetylates the N-terminal lysine residue of Alba, the major archaeal chromatin protein and that, in turn, increases Alba's DNA binding affinity, thereby repressing transcription. The sequence is that of NAD-dependent protein deacylase from Pyrococcus furiosus (strain ATCC 43587 / DSM 3638 / JCM 8422 / Vc1).